A 509-amino-acid chain; its full sequence is Maturase K (509 aa).

The protein belongs to the intron maturase 2 family. MatK subfamily.

The protein resides in the plastid. The protein localises to the chloroplast. Usually encoded in the trnK tRNA gene intron. Probably assists in splicing its own and other chloroplast group II introns. The polypeptide is Maturase K (Otacanthus azureus (Brazilian snapdragon)).